A 359-amino-acid polypeptide reads, in one-letter code: Guanine nucleotide-binding protein-like alpha-11 subunit (359 aa).

Gly-2 is lipidated: N-myristoyl glycine. Residues 29-359 (KLIKILMMGN…YVKKILEDTI (331 aa)) enclose the G-alpha domain. The segment at 32 to 45 (KILMMGNENSAKST) is G1 motif. Ser-44 contacts Mg(2+). The G2 motif stretch occupies residues 176 to 185 (DIIRCSKNNQ). Residues 178–185 (IRCSKNNQ), 204–208 (DTGNQ), and 281–284 (NKKE) contribute to the GTP site. The G3 motif stretch occupies residues 200–209 (FVFVDTGNQK). Positions 277–284 (IVLFNKKE) are G4 motif. The segment at 337 to 342 (FNSSDT) is G5 motif.

It belongs to the G-alpha family.

In Dictyostelium discoideum (Social amoeba), this protein is Guanine nucleotide-binding protein-like alpha-11 subunit (gpaK).